We begin with the raw amino-acid sequence, 39 residues long: Cygnin (39 aa).

The residue at position 1 (glutamine 1) is a Pyrrolidone carboxylic acid. 3 cysteine pairs are disulfide-bonded: cysteine 6–cysteine 33, cysteine 12–cysteine 28, and cysteine 16–cysteine 32.

This sequence belongs to the transferrin family.

This chain is Cygnin, found in Cygnus atratus (Black swan).